Consider the following 624-residue polypeptide: Ubiquitin-associated and SH3 domain-containing protein A (624 aa).

The UBA domain maps to 19–60 (RSTPSLLDPLLAMGFPTHTALKALAATGRKTAEAAADWLHGH). One can recognise an SH3 domain in the interval 238-303 (VHYQTLKALF…PENYTERANE (66 aa)). Positions 358 to 624 (RRGILVVRHG…FNWRNWISSN (267 aa)) are phosphatase-like.

As to quaternary structure, homodimer or homooligomer. Interacts with CBL. Part of a complex containing CBL and activated EGFR. Interacts with ubiquitin and with mono-ubiquitinated proteins. Interacts with dynamin.

The protein localises to the cytoplasm. It is found in the nucleus. Interferes with CBL-mediated down-regulation and degradation of receptor-type tyrosine kinases. Promotes accumulation of activated target receptors, such as T-cell receptors, EGFR and PDGFRB, on the cell surface. May inhibit dynamin-dependent endocytic pathways by functionally sequestering dynamin via its SH3 domain. Exhibits negligible protein tyrosine phosphatase activity at neutral pH. May act as a dominant-negative regulator of UBASH3B-dependent dephosphorylation. This is Ubiquitin-associated and SH3 domain-containing protein A (Ubash3a) from Mus musculus (Mouse).